Reading from the N-terminus, the 96-residue chain is NADH-ubiquinone oxidoreductase chain 4L (96 aa).

The next 3 helical transmembrane spans lie at 2-22 (IMFL…FCFV), 28-48 (LLSM…MLFI), and 62-82 (MFLT…VSMI).

This sequence belongs to the complex I subunit 4L family.

It localises to the mitochondrion membrane. It carries out the reaction a ubiquinone + NADH + 5 H(+)(in) = a ubiquinol + NAD(+) + 4 H(+)(out). In terms of biological role, core subunit of the mitochondrial membrane respiratory chain NADH dehydrogenase (Complex I) that is believed to belong to the minimal assembly required for catalysis. Complex I functions in the transfer of electrons from NADH to the respiratory chain. The immediate electron acceptor for the enzyme is believed to be ubiquinone. The sequence is that of NADH-ubiquinone oxidoreductase chain 4L (mt:ND4L) from Drosophila nasuta F (Fruit fly).